Consider the following 346-residue polypeptide: Holliday junction branch migration complex subunit RuvB (346 aa).

Residues 4-185 are large ATPase domain (RuvB-L); that stretch reads SDRIITASPF…FGIVSRLEFY (182 aa). ATP is bound by residues Leu24, Arg25, Gly66, Lys69, Thr70, Thr71, 132–134, Arg175, Tyr185, and Arg222; that span reads EDY. Thr70 contributes to the Mg(2+) binding site. The tract at residues 186–256 is small ATPAse domain (RuvB-S); that stretch reads TADELGKIVT…VADAALQMLD (71 aa). The segment at 259-346 is head domain (RuvB-H); that stretch reads ATGLDVLDRK…TTVPSLFDPD (88 aa). DNA is bound by residues Arg295, Arg314, and Arg319.

The protein belongs to the RuvB family. In terms of assembly, homohexamer. Forms an RuvA(8)-RuvB(12)-Holliday junction (HJ) complex. HJ DNA is sandwiched between 2 RuvA tetramers; dsDNA enters through RuvA and exits via RuvB. An RuvB hexamer assembles on each DNA strand where it exits the tetramer. Each RuvB hexamer is contacted by two RuvA subunits (via domain III) on 2 adjacent RuvB subunits; this complex drives branch migration. In the full resolvosome a probable DNA-RuvA(4)-RuvB(12)-RuvC(2) complex forms which resolves the HJ.

Its subcellular location is the cytoplasm. The enzyme catalyses ATP + H2O = ADP + phosphate + H(+). The RuvA-RuvB-RuvC complex processes Holliday junction (HJ) DNA during genetic recombination and DNA repair, while the RuvA-RuvB complex plays an important role in the rescue of blocked DNA replication forks via replication fork reversal (RFR). RuvA specifically binds to HJ cruciform DNA, conferring on it an open structure. The RuvB hexamer acts as an ATP-dependent pump, pulling dsDNA into and through the RuvAB complex. RuvB forms 2 homohexamers on either side of HJ DNA bound by 1 or 2 RuvA tetramers; 4 subunits per hexamer contact DNA at a time. Coordinated motions by a converter formed by DNA-disengaged RuvB subunits stimulates ATP hydrolysis and nucleotide exchange. Immobilization of the converter enables RuvB to convert the ATP-contained energy into a lever motion, pulling 2 nucleotides of DNA out of the RuvA tetramer per ATP hydrolyzed, thus driving DNA branch migration. The RuvB motors rotate together with the DNA substrate, which together with the progressing nucleotide cycle form the mechanistic basis for DNA recombination by continuous HJ branch migration. Branch migration allows RuvC to scan DNA until it finds its consensus sequence, where it cleaves and resolves cruciform DNA. The chain is Holliday junction branch migration complex subunit RuvB from Nitrosomonas europaea (strain ATCC 19718 / CIP 103999 / KCTC 2705 / NBRC 14298).